Here is a 396-residue protein sequence, read N- to C-terminus: Proteasome-activating nucleotidase (396 aa).

Residues 16–57 adopt a coiled-coil conformation; that stretch reads VTYLKRRIRQLELQVRMLEADKERLERELSRLRSEMSRLRQP. ATP-binding positions include 181–186 and His-320; that span reads GCGKTL. A docks into pockets in the proteasome alpha-ring to cause gate opening region spans residues 394 to 396; it reads IYG.

Belongs to the AAA ATPase family. As to quaternary structure, homohexamer. The hexameric complex has a two-ring architecture resembling a top hat that caps the 20S proteasome core at one or both ends. Upon ATP-binding, the C-terminus of PAN interacts with the alpha-rings of the proteasome core by binding to the intersubunit pockets.

The protein resides in the cytoplasm. Functionally, ATPase which is responsible for recognizing, binding, unfolding and translocation of substrate proteins into the archaeal 20S proteasome core particle. Is essential for opening the gate of the 20S proteasome via an interaction with its C-terminus, thereby allowing substrate entry and access to the site of proteolysis. Thus, the C-termini of the proteasomal ATPase function like a 'key in a lock' to induce gate opening and therefore regulate proteolysis. Unfolding activity requires energy from ATP hydrolysis, whereas ATP binding alone promotes ATPase-20S proteasome association which triggers gate opening, and supports translocation of unfolded substrates. This chain is Proteasome-activating nucleotidase, found in Pyrococcus furiosus (strain ATCC 43587 / DSM 3638 / JCM 8422 / Vc1).